Consider the following 379-residue polypeptide: Glutamate 5-kinase (379 aa).

Lys15 lines the ATP pocket. Positions 54, 144, and 156 each coordinate substrate. An ATP-binding site is contributed by 176–177 (TD). Residues 282-360 (KGVILVDAGA…GEIERALGYK (79 aa)) form the PUA domain.

It belongs to the glutamate 5-kinase family.

The protein resides in the cytoplasm. The enzyme catalyses L-glutamate + ATP = L-glutamyl 5-phosphate + ADP. The protein operates within amino-acid biosynthesis; L-proline biosynthesis; L-glutamate 5-semialdehyde from L-glutamate: step 1/2. Catalyzes the transfer of a phosphate group to glutamate to form L-glutamate 5-phosphate. The sequence is that of Glutamate 5-kinase from Anaeromyxobacter dehalogenans (strain 2CP-C).